The chain runs to 912 residues: Metabotropic glutamate receptor 4 (912 aa).

Residues 1–32 form the signal peptide; it reads MSGKGGWAWWWARLPLCLLLSLYGSWVPSSLG. Topologically, residues 33 to 586 are extracellular; sequence KPKGHPHMNS…PIVKLEWDSP (554 aa). A disulfide bridge links Cys-67 with Cys-109. Asn-98 carries N-linked (GlcNAc...) asparagine glycosylation. L-glutamate contacts are provided by residues Ser-159, 180 to 182, and Tyr-230; that span reads AST. Cystine bridges form between Cys-249-Cys-538, Cys-372-Cys-388, Cys-428-Cys-435, Cys-520-Cys-539, Cys-524-Cys-542, Cys-545-Cys-557, and Cys-560-Cys-573. Asn-301 is a glycosylation site (N-linked (GlcNAc...) asparagine). An L-glutamate-binding site is contributed by Asp-312. Lys-405 is a binding site for L-glutamate. A helical membrane pass occupies residues 587–607; sequence WAVLPLFLAVVGIAATLFVVV. The Cytoplasmic segment spans residues 608–624; sequence TFVRYNDTPIVKASGRE. Residues 625–645 form a helical membrane-spanning segment; sequence LSYVLLAGIFLCYATTFLMIA. The Extracellular segment spans residues 646 to 653; the sequence is EPDLGTCS. A helical membrane pass occupies residues 654 to 671; that stretch reads LRRIFLGLGMSISYAALL. The Cytoplasmic portion of the chain corresponds to 672 to 699; that stretch reads TKTNRIYRIFEQGKRSVSAPRFISPASQ. The chain crosses the membrane as a helical span at residues 700 to 720; that stretch reads LAITFVLISLQLLCICVWFVV. At 721–751 the chain is on the extracellular side; the sequence is DPSHSVVDFQDQRTLDPRFARGVLKCDISDL. Residues 752 to 772 traverse the membrane as a helical segment; that stretch reads SLICLLGYSMLLMVTCTVYAI. The Cytoplasmic portion of the chain corresponds to 773-786; that stretch reads KTRGVPETFNEAKP. Residues 787–807 traverse the membrane as a helical segment; it reads IGFTMYTTCIVWLAFIPIFFG. Topologically, residues 808 to 826 are extracellular; that stretch reads TSQSADKLYIQTTTLTVSV. Residues 827-847 traverse the membrane as a helical segment; the sequence is SLSASVSLGMLYMPKVYIILF. The Cytoplasmic segment spans residues 848–912; it reads HPEQNVPKRK…TYVTYTNHAI (65 aa).

It belongs to the G-protein coupled receptor 3 family. Interacts with PICK1.

The protein resides in the cell membrane. In terms of biological role, G-protein coupled receptor for glutamate. Ligand binding causes a conformation change that triggers signaling via guanine nucleotide-binding proteins (G proteins) and modulates the activity of down-stream effectors. Signaling inhibits adenylate cyclase activity. This Mus musculus (Mouse) protein is Metabotropic glutamate receptor 4 (Grm4).